The primary structure comprises 61 residues: Small ribosomal subunit protein bS21 (61 aa).

The interval 36–61 (EHYESPSVKRKKKAEAARKRKYKYGR) is disordered. Residues 43–61 (VKRKKKAEAARKRKYKYGR) show a composition bias toward basic residues.

It belongs to the bacterial ribosomal protein bS21 family.

In Caldanaerobacter subterraneus subsp. tengcongensis (strain DSM 15242 / JCM 11007 / NBRC 100824 / MB4) (Thermoanaerobacter tengcongensis), this protein is Small ribosomal subunit protein bS21 (rpsU).